The primary structure comprises 405 residues: Tryptophan synthase beta chain (405 aa).

K98 is subject to N6-(pyridoxal phosphate)lysine.

The protein belongs to the TrpB family. In terms of assembly, tetramer of two alpha and two beta chains. The cofactor is pyridoxal 5'-phosphate.

The catalysed reaction is (1S,2R)-1-C-(indol-3-yl)glycerol 3-phosphate + L-serine = D-glyceraldehyde 3-phosphate + L-tryptophan + H2O. It functions in the pathway amino-acid biosynthesis; L-tryptophan biosynthesis; L-tryptophan from chorismate: step 5/5. Functionally, the beta subunit is responsible for the synthesis of L-tryptophan from indole and L-serine. The protein is Tryptophan synthase beta chain of Parvibaculum lavamentivorans (strain DS-1 / DSM 13023 / NCIMB 13966).